We begin with the raw amino-acid sequence, 722 residues long: Fatty acid oxidation complex subunit alpha (722 aa).

The enoyl-CoA hydratase/isomerase stretch occupies residues 1–189; the sequence is MIYQGKSLSA…AQGAIDAVVE (189 aa). Residue D296 coordinates substrate. The interval 311–722 is 3-hydroxyacyl-CoA dehydrogenase; it reads TKAVNKAAVL…SYFTTDVKLA (412 aa). Residues M325, D344, 401–403, K408, and S430 each bind NAD(+); that span reads VVE. The For 3-hydroxyacyl-CoA dehydrogenase activity role is filled by H451. N454 serves as a coordination point for NAD(+). Substrate-binding residues include N501 and Y661.

This sequence in the N-terminal section; belongs to the enoyl-CoA hydratase/isomerase family. In the C-terminal section; belongs to the 3-hydroxyacyl-CoA dehydrogenase family. As to quaternary structure, heterotetramer of two alpha chains (FadB) and two beta chains (FadA).

It catalyses the reaction a (3S)-3-hydroxyacyl-CoA + NAD(+) = a 3-oxoacyl-CoA + NADH + H(+). The catalysed reaction is a (3S)-3-hydroxyacyl-CoA = a (2E)-enoyl-CoA + H2O. The enzyme catalyses a 4-saturated-(3S)-3-hydroxyacyl-CoA = a (3E)-enoyl-CoA + H2O. It carries out the reaction (3S)-3-hydroxybutanoyl-CoA = (3R)-3-hydroxybutanoyl-CoA. It catalyses the reaction a (3Z)-enoyl-CoA = a 4-saturated (2E)-enoyl-CoA. The catalysed reaction is a (3E)-enoyl-CoA = a 4-saturated (2E)-enoyl-CoA. It participates in lipid metabolism; fatty acid beta-oxidation. Functionally, involved in the aerobic and anaerobic degradation of long-chain fatty acids via beta-oxidation cycle. Catalyzes the formation of 3-oxoacyl-CoA from enoyl-CoA via L-3-hydroxyacyl-CoA. It can also use D-3-hydroxyacyl-CoA and cis-3-enoyl-CoA as substrate. The sequence is that of Fatty acid oxidation complex subunit alpha from Colwellia psychrerythraea (strain 34H / ATCC BAA-681) (Vibrio psychroerythus).